Consider the following 460-residue polypeptide: Flavonol 3-O-glucosyltransferase (460 aa).

Catalysis depends on His-23, which acts as the Proton acceptor. An anthocyanidin contacts are provided by His-23 and Gln-88. Asp-123 acts as the Charge relay in catalysis. Thr-145 is a binding site for UDP-alpha-D-glucose. His-154 is an an anthocyanidin binding site. The UDP-alpha-D-glucose site is built by Ala-339, Gln-341, His-356, Trp-359, Asn-360, Ser-361, and Glu-364. Residue Gly-379 participates in an anthocyanidin binding. Positions 380 and 381 each coordinate UDP-alpha-D-glucose.

The protein belongs to the UDP-glycosyltransferase family.

It carries out the reaction a flavonol + UDP-alpha-D-glucose = a flavonol 3-O-beta-D-glucoside + UDP + H(+). The catalysed reaction is quercetin + UDP-alpha-D-glucose = quercetin 3-O-beta-D-glucoside + UDP + H(+). It functions in the pathway flavonoid metabolism. Functionally, flavonol 3-O-glucosyltransferase that catalyzes the transfer of glucose from UDP-glucose to the 3-OH position of quercetin and kaempferol. Possesses high quercetin 3-O-glucosyltransferase activity in vitro. Catalyzes the glycosylation of anthocyanins from UDP-glucose. Also active in vitro on benzoates and benzoate derivatives. The polypeptide is Flavonol 3-O-glucosyltransferase (Arabidopsis thaliana (Mouse-ear cress)).